Here is a 696-residue protein sequence, read N- to C-terminus: UvrABC system protein C (696 aa).

A GIY-YIG domain is found at 16-95; the sequence is TEPGVYKFRD…IKRFDPRFNV (80 aa). The UVR domain maps to 208–243; the sequence is DKVTRKLNADMMAAAEELDFERAARLRDDLEAIDKV.

This sequence belongs to the UvrC family. As to quaternary structure, interacts with UvrB in an incision complex.

It is found in the cytoplasm. Its function is as follows. The UvrABC repair system catalyzes the recognition and processing of DNA lesions. UvrC both incises the 5' and 3' sides of the lesion. The N-terminal half is responsible for the 3' incision and the C-terminal half is responsible for the 5' incision. In Corynebacterium glutamicum (strain R), this protein is UvrABC system protein C.